Consider the following 263-residue polypeptide: NAD(P)H-quinone oxidoreductase subunit K, chloroplastic (263 aa).

Residues Cys64, Cys65, Cys129, and Cys160 each coordinate [4Fe-4S] cluster.

It belongs to the complex I 20 kDa subunit family. NDH is composed of at least 16 different subunits, 5 of which are encoded in the nucleus. Requires [4Fe-4S] cluster as cofactor.

Its subcellular location is the plastid. It localises to the chloroplast thylakoid membrane. The catalysed reaction is a plastoquinone + NADH + (n+1) H(+)(in) = a plastoquinol + NAD(+) + n H(+)(out). The enzyme catalyses a plastoquinone + NADPH + (n+1) H(+)(in) = a plastoquinol + NADP(+) + n H(+)(out). NDH shuttles electrons from NAD(P)H:plastoquinone, via FMN and iron-sulfur (Fe-S) centers, to quinones in the photosynthetic chain and possibly in a chloroplast respiratory chain. The immediate electron acceptor for the enzyme in this species is believed to be plastoquinone. Couples the redox reaction to proton translocation, and thus conserves the redox energy in a proton gradient. This chain is NAD(P)H-quinone oxidoreductase subunit K, chloroplastic (ndhK), found in Huperzia lucidula (Shining clubmoss).